The sequence spans 450 residues: ATP-dependent protease ATPase subunit HslU (450 aa).

Residues valine 29, glycine 71–glutamate 76, aspartate 261, glutamate 328, and arginine 400 contribute to the ATP site.

It belongs to the ClpX chaperone family. HslU subfamily. A double ring-shaped homohexamer of HslV is capped on each side by a ring-shaped HslU homohexamer. The assembly of the HslU/HslV complex is dependent on binding of ATP.

Its subcellular location is the cytoplasm. Its function is as follows. ATPase subunit of a proteasome-like degradation complex; this subunit has chaperone activity. The binding of ATP and its subsequent hydrolysis by HslU are essential for unfolding of protein substrates subsequently hydrolyzed by HslV. HslU recognizes the N-terminal part of its protein substrates and unfolds these before they are guided to HslV for hydrolysis. This is ATP-dependent protease ATPase subunit HslU from Rickettsia peacockii (strain Rustic).